A 278-amino-acid polypeptide reads, in one-letter code: 4-deoxy-L-threo-5-hexosulose-uronate ketol-isomerase (278 aa).

Zn(2+) contacts are provided by His196, His198, Glu203, and His245.

The protein belongs to the KduI family. Zn(2+) is required as a cofactor.

It carries out the reaction 5-dehydro-4-deoxy-D-glucuronate = 3-deoxy-D-glycero-2,5-hexodiulosonate. It functions in the pathway glycan metabolism; pectin degradation; 2-dehydro-3-deoxy-D-gluconate from pectin: step 4/5. Functionally, catalyzes the isomerization of 5-dehydro-4-deoxy-D-glucuronate to 3-deoxy-D-glycero-2,5-hexodiulosonate. The polypeptide is 4-deoxy-L-threo-5-hexosulose-uronate ketol-isomerase (Salmonella dublin (strain CT_02021853)).